Here is a 150-residue protein sequence, read N- to C-terminus: Large ribosomal subunit protein bL9 (150 aa).

Belongs to the bacterial ribosomal protein bL9 family.

Functionally, binds to the 23S rRNA. In Mycoplasmopsis pulmonis (strain UAB CTIP) (Mycoplasma pulmonis), this protein is Large ribosomal subunit protein bL9.